The following is a 257-amino-acid chain: Taurine import ATP-binding protein TauB (257 aa).

The 228-residue stretch at 6 to 233 (LDKISIHYDG…RYAAGEPIRA (228 aa)) folds into the ABC transporter domain. 38 to 45 (GRSGCGKT) serves as a coordination point for ATP.

Belongs to the ABC transporter superfamily. Taurine importer (TC 3.A.1.17.1) family. As to quaternary structure, the complex is composed of two ATP-binding proteins (TauB), two transmembrane proteins (TauC) and a solute-binding protein (TauA).

The protein localises to the cell inner membrane. The enzyme catalyses taurine(out) + ATP + H2O = taurine(in) + ADP + phosphate + H(+). Part of the ABC transporter complex TauABC involved in taurine import. Responsible for energy coupling to the transport system. The sequence is that of Taurine import ATP-binding protein TauB from Mesorhizobium japonicum (strain LMG 29417 / CECT 9101 / MAFF 303099) (Mesorhizobium loti (strain MAFF 303099)).